Reading from the N-terminus, the 239-residue chain is Adenylate dimethylallyltransferase (239 aa).

The protein belongs to the isopentenyl transferase family.

It carries out the reaction dimethylallyl diphosphate + AMP = N(6)-(dimethylallyl)adenosine 5'-phosphate + diphosphate. Transfers dimethylallyl groups to AMP as part of the biosynthesis of cytokinin phytohormones. This Rhizobium radiobacter (Agrobacterium tumefaciens) protein is Adenylate dimethylallyltransferase (ipt).